Reading from the N-terminus, the 957-residue chain is MAAQKIRSANTNGLPRCKSEGALIDFSGVPDPSLSEVKVLSPSSLRIDNPASLENVKEVVAIKDYCPNNFTTLKFSKGEHLYVLDASGGDWWYAHNTTEMGYIPSSYVQPLNYRDSCLSDSGMIDGLLESVDEGVKELDLLGDWTNSSNQDSVKKCHNNPFLRPSVSNPFLNGPLVPQTHTADTENSVDLLLFDPLAPSHAIASETSTDVLLDLLPNTSQNEVTVPVKRDNPFFRSKRSYSLSELSVLQAKSESPTTGSFFAGLKSPAPEQFQSREDFRTAWLNHRKLARSCHDLDLLGQNPGWGQTQPVETSIVCRLDSSGGAVQLPDTSISILVPEKHVASGETQQISLKALLDPPLELNNDKCTTVSPVLEIKLSNMDVQSPLTLEVRISVALGGNASALNMVGIKCLRSDAKEGPYNSVTQIYMYGDTVQVKLDNLEPVMYVVMVAQGQGIVSPSSVWEYINKKVTVGLYGPKHIHPSFKAVIVIFGHDCAPKSLLVNEVGQQANKSAPVTLQLWGKQQFVLPKPQDLQLCLFSNMTNYRVDAGDQGKMVRGFQLKLGKVSRLIFPITCQDSAQLSDFTLRVQVRDEAGGVLSQYCVQTPQPPPKTGSKSTGPRRFLKKKEVGKIVLSPLALTYKYPTFQDRPVTSLKYGKLIKTVVRQSKNPYLLEYKKGDVIGLLSEEKIRLKGQLWNKEWYIGYYQGKLGLVHAKNVLVVGKVKPSFFSGPELTTGLLLEQILRPCKFLTYIYASVRTLLMENIGSWRCFADALGYGNLPLSYFCRVELESETERVASVLEKLKEECNSEGKEKKSFQKELIMALLKIDCQGLVVRLIQDFVLLTTAVEVASRWRELAEKLARVSKQQMEGYEAPHRDRNGMLDSEAMWKPAYDFLLTWSAQIGESYRDVIQELHTGLDKMRSPITKRWKHLTGTLIFVNSLDILRAAAFSTQEPEDCII.

One can recognise an SH3 1 domain in the interval 54 to 113 (ENVKEVVAIKDYCPNNFTTLKFSKGEHLYVLDASGGDWWYAHNTTEMGYIPSSYVQPLNY). The ZU5 domain occupies 312–449 (TSIVCRLDSS…LEPVMYVVMV (138 aa)). Positions 649 to 719 (TSLKYGKLIK…HAKNVLVVGK (71 aa)) constitute an SH3 2 domain.

In terms of assembly, homodimer or homooligomer.

It localises to the membrane. Its subcellular location is the clathrin-coated pit. It is found in the cytoplasmic vesicle. The protein resides in the clathrin-coated vesicle. The protein localises to the nucleus. Possible role in regulating endocytosis of the transferrin receptor at the plasma membrane. Alternatively, may function as a negative regulator of the amino acid-induced TOR signaling by inhibiting the formation of active Rag GTPase complexes. Preferentially binds inactive Rag GTPase complexes and prevents their interaction with the mTORC1 complex inhibiting its relocalization to lysosomes and its activation. Thereby, may indirectly regulate cell growth, proliferation and autophagy. In Xenopus laevis (African clawed frog), this protein is SH3 domain-binding protein 4-B (sh3bp4-b).